The primary structure comprises 117 residues: NADPH-dependent 7-cyano-7-deazaguanine reductase (117 aa).

C31 (thioimide intermediate) is an active-site residue. D38 acts as the Proton donor in catalysis. Substrate contacts are provided by residues 53-55 and 72-73; these read IEL and YE.

The protein belongs to the GTP cyclohydrolase I family. QueF type 1 subfamily.

The protein resides in the cytoplasm. It catalyses the reaction 7-aminomethyl-7-carbaguanine + 2 NADP(+) = 7-cyano-7-deazaguanine + 2 NADPH + 3 H(+). The protein operates within tRNA modification; tRNA-queuosine biosynthesis. In terms of biological role, catalyzes the NADPH-dependent reduction of 7-cyano-7-deazaguanine (preQ0) to 7-aminomethyl-7-deazaguanine (preQ1). The protein is NADPH-dependent 7-cyano-7-deazaguanine reductase of Chlorobaculum tepidum (strain ATCC 49652 / DSM 12025 / NBRC 103806 / TLS) (Chlorobium tepidum).